A 213-amino-acid chain; its full sequence is uncharacterized protein (213 aa).

Catalysis depends on charge relay system residues Ser-114, Asp-162, and His-194.

It belongs to the AB hydrolase superfamily. AB hydrolase 2 family.

This is an uncharacterized protein from Rickettsia bellii (strain RML369-C).